Consider the following 215-residue polypeptide: ATP-dependent dethiobiotin synthetase BioD (215 aa).

Position 13–18 (13–18 (DIGKTI)) interacts with ATP. T17 is a binding site for Mg(2+). K38 is a catalytic residue. T42 serves as a coordination point for substrate. ATP contacts are provided by residues D50, 115-118 (EGAG), and 175-176 (NH). Mg(2+) contacts are provided by D50 and E115.

Belongs to the dethiobiotin synthetase family. In terms of assembly, homodimer. The cofactor is Mg(2+).

The protein localises to the cytoplasm. The enzyme catalyses (7R,8S)-7,8-diammoniononanoate + CO2 + ATP = (4R,5S)-dethiobiotin + ADP + phosphate + 3 H(+). It participates in cofactor biosynthesis; biotin biosynthesis; biotin from 7,8-diaminononanoate: step 1/2. Its function is as follows. Catalyzes a mechanistically unusual reaction, the ATP-dependent insertion of CO2 between the N7 and N8 nitrogen atoms of 7,8-diaminopelargonic acid (DAPA, also called 7,8-diammoniononanoate) to form a ureido ring. This is ATP-dependent dethiobiotin synthetase BioD from Neisseria meningitidis serogroup A / serotype 4A (strain DSM 15465 / Z2491).